The primary structure comprises 389 residues: Arginine biosynthesis bifunctional protein ArgJ (389 aa).

Residues Thr150, Lys173, Thr184, Glu263, Asn384, and Thr389 each coordinate substrate. The active-site Nucleophile is the Thr184.

This sequence belongs to the ArgJ family. In terms of assembly, heterotetramer of two alpha and two beta chains.

Its subcellular location is the cytoplasm. It carries out the reaction N(2)-acetyl-L-ornithine + L-glutamate = N-acetyl-L-glutamate + L-ornithine. The catalysed reaction is L-glutamate + acetyl-CoA = N-acetyl-L-glutamate + CoA + H(+). Its pathway is amino-acid biosynthesis; L-arginine biosynthesis; L-ornithine and N-acetyl-L-glutamate from L-glutamate and N(2)-acetyl-L-ornithine (cyclic): step 1/1. It functions in the pathway amino-acid biosynthesis; L-arginine biosynthesis; N(2)-acetyl-L-ornithine from L-glutamate: step 1/4. In terms of biological role, catalyzes two activities which are involved in the cyclic version of arginine biosynthesis: the synthesis of N-acetylglutamate from glutamate and acetyl-CoA as the acetyl donor, and of ornithine by transacetylation between N(2)-acetylornithine and glutamate. The polypeptide is Arginine biosynthesis bifunctional protein ArgJ (Deinococcus radiodurans (strain ATCC 13939 / DSM 20539 / JCM 16871 / CCUG 27074 / LMG 4051 / NBRC 15346 / NCIMB 9279 / VKM B-1422 / R1)).